The primary structure comprises 473 residues: ATP synthase subunit beta (473 aa).

ATP is bound at residue 158–165; sequence GGAGVGKT.

It belongs to the ATPase alpha/beta chains family. F-type ATPases have 2 components, CF(1) - the catalytic core - and CF(0) - the membrane proton channel. CF(1) has five subunits: alpha(3), beta(3), gamma(1), delta(1), epsilon(1). CF(0) has three main subunits: a(1), b(2) and c(9-12). The alpha and beta chains form an alternating ring which encloses part of the gamma chain. CF(1) is attached to CF(0) by a central stalk formed by the gamma and epsilon chains, while a peripheral stalk is formed by the delta and b chains.

The protein resides in the cell membrane. It carries out the reaction ATP + H2O + 4 H(+)(in) = ADP + phosphate + 5 H(+)(out). In terms of biological role, produces ATP from ADP in the presence of a proton gradient across the membrane. The catalytic sites are hosted primarily by the beta subunits. In Bacillus caldotenax, this protein is ATP synthase subunit beta.